The following is a 202-amino-acid chain: Glycerol-3-phosphate acyltransferase (202 aa).

6 consecutive transmembrane segments (helical) span residues 3–23 (NLII…LILA), 61–81 (IATI…LKFL), 87–107 (LLWS…YLLF), 118–138 (GAMI…WVVI), 144–164 (ISSL…FIFN), and 167–187 (LEIH…YKHL).

The protein belongs to the PlsY family. As to quaternary structure, probably interacts with PlsX.

It is found in the cell inner membrane. It catalyses the reaction an acyl phosphate + sn-glycerol 3-phosphate = a 1-acyl-sn-glycero-3-phosphate + phosphate. It functions in the pathway lipid metabolism; phospholipid metabolism. In terms of biological role, catalyzes the transfer of an acyl group from acyl-phosphate (acyl-PO(4)) to glycerol-3-phosphate (G3P) to form lysophosphatidic acid (LPA). This enzyme utilizes acyl-phosphate as fatty acyl donor, but not acyl-CoA or acyl-ACP. This Campylobacter jejuni subsp. jejuni serotype O:6 (strain 81116 / NCTC 11828) protein is Glycerol-3-phosphate acyltransferase.